A 305-amino-acid chain; its full sequence is Alpha-N-acetylgalactosaminide alpha-2,6-sialyltransferase 3 (305 aa).

Residues 1-8 (MACILKRK) are Cytoplasmic-facing. The helical; Signal-anchor for type II membrane protein transmembrane segment at 9-28 (SVIAVSFIAAFLFLLVVRLV) threads the bilayer. Topologically, residues 29–305 (NEVNFPLLLN…IFTHPNWTLS (277 aa)) are lumenal. Cys80 and Cys229 are disulfide-bonded. Residues Asn148, Asn239, and Asn301 are each glycosylated (N-linked (GlcNAc...) asparagine).

It belongs to the glycosyltransferase 29 family. Expressed in brain and kidney. Observed in the epithelium of the proximal tubules, marginal expression was also found in the distal tubules and collecting tubules.

It localises to the golgi apparatus membrane. It carries out the reaction an alpha-Neu5Ac-(2-&gt;3)-beta-D-Gal-(1-&gt;3)-D-GlcNAc derivative + CMP-N-acetyl-beta-neuraminate = an alpha-Neu5Ac-(2-&gt;3)-beta-D-Gal-(1-&gt;3)-[alpha-Neu5Ac-(2-&gt;6)]-D-GlcNAc derivative + CMP + H(+). The catalysed reaction is a ganglioside GM1b (d18:1(4E)) + CMP-N-acetyl-beta-neuraminate = a ganglioside GD1alpha (d18:1(4E)) + CMP + H(+). The enzyme catalyses a globoside MSGG + CMP-N-acetyl-beta-neuraminate = a globoside DSGG + CMP + H(+). It catalyses the reaction 3-O-[alpha-Neu5Ac-(2-&gt;3)-beta-D-Gal-(1-&gt;3)-alpha-D-GalNAc]-L-Ser-[protein] + CMP-N-acetyl-beta-neuraminate = a 3-O-{alpha-Neu5Ac-(2-&gt;3)-beta-D-Gal-(1-&gt;3)-[alpha-Neu5Ac-(2-&gt;6)]-alpha-D-GalNAc}-L-seryl-[protein] + CMP + H(+). It carries out the reaction 3-O-[alpha-Neu5Ac-(2-&gt;3)-beta-D-Gal-(1-&gt;3)-alpha-D-GalNAc]-L-Thr-[protein] + CMP-N-acetyl-beta-neuraminate = a 3-O-{alpha-Neu5Ac-(2-&gt;3)-beta-D-Gal-(1-&gt;3)-[alpha-Neu5Ac-(2-&gt;6)]-alpha-D-GalNAc}-L-threonyl-[protein] + CMP + H(+). Its pathway is protein modification; protein glycosylation. It participates in glycolipid biosynthesis. Functionally, transfers the sialyl group (N-acetyl-alpha-neuraminyl or NeuAc) from CMP-NeuAc to the GalNAc residue on the NeuAc-alpha-2,3-Gal-beta-1,3-GalNAc sequence of glycoproteins and glycolipids forming an alpha-2,6-linkage. Produces branched type disialyl structures by transfer of a sialyl group onto a GalNAc residue inside the backbone core chains. ST6GalNAcIII prefers glycolipids to glycoproteins, predominantly catalyzing the biosynthesis of ganglioside GD1alpha from GM1b. GD1alpha is a critical molecule in the communication and interaction between neuronal cells and their supportive cells, particularly in brain tissues, and functions as an adhesion molecule in the process of metastasis. Sialylation of glycoproteins or glycosphingolipids is very important in tumor development, neuronal development, nerve repair, immunological processes and regulation of hormone sensitivity. In Homo sapiens (Human), this protein is Alpha-N-acetylgalactosaminide alpha-2,6-sialyltransferase 3 (ST6GALNAC3).